Reading from the N-terminus, the 141-residue chain is Hemoglobin subunit alpha (141 aa).

A Globin domain is found at 1 to 141 (VLSEEDKSHV…VSAMLTSKYR (141 aa)). An O2-binding site is contributed by H58. Residue H87 participates in heme b binding.

Belongs to the globin family. As to quaternary structure, heterotetramer of two alpha chains and two beta chains. As to expression, red blood cells.

Involved in oxygen transport from the lung to the various peripheral tissues. The protein is Hemoglobin subunit alpha (HBA) of Caiman crocodilus (Spectacled caiman).